The sequence spans 60 residues: Large ribosomal subunit protein bL32 (60 aa).

It belongs to the bacterial ribosomal protein bL32 family.

The sequence is that of Large ribosomal subunit protein bL32 from Pseudothermotoga lettingae (strain ATCC BAA-301 / DSM 14385 / NBRC 107922 / TMO) (Thermotoga lettingae).